The following is a 140-amino-acid chain: Zinc finger SWIM domain-containing protein 7 (140 aa).

Residues 66–114 (YQVLGSSSKTYTCLASCHYCSCPAFAFSVLRKSDSILCKHLLAVYLSQV) form an SWIM-type zinc finger.

This sequence belongs to the SWS1 family. Interacts with RAD51D and XRCC3; involved in homologous recombination repair. Interacts with SWSAP1; they form a functional complex involved in homologous recombination repair and stabilize each other. In terms of tissue distribution, expressed in ovary and testis.

It localises to the nucleus. Involved in early stages of the homologous recombination repair (HRR) pathway of double-stranded DNA breaks arising during DNA replication or induced by DNA-damaging agents. Required for meiotic progression, hence for fertility. The protein is Zinc finger SWIM domain-containing protein 7 (ZSWIM7) of Homo sapiens (Human).